A 569-amino-acid chain; its full sequence is AsmA family protein YicH (569 aa).

The Cytoplasmic segment spans residues 1–6 (MKFIGK). Residues 7-27 (LLLYILIALLVAIAGLYFLLQ) form a helical membrane-spanning segment. The Periplasmic segment spans residues 28–569 (TRWGAEHISA…GEVTSTEPVR (542 aa)).

The protein belongs to the AsmA family.

It localises to the cell inner membrane. The protein is AsmA family protein YicH (yicH) of Escherichia coli (strain K12).